The chain runs to 217 residues: Transmembrane protein 247 (217 aa).

Over residues 1–10 (MATEDREMME) the composition is skewed to basic and acidic residues. The interval 1 to 87 (MATEDREMME…GPATTKGQAG (87 aa)) is disordered. The stretch at 109–154 (RERDAEMELEKVRMEFELKRLKYLHEENERQRQHEEVMEQLQQQAT) forms a coiled coil. Transmembrane regions (helical) follow at residues 165-185 (LLLP…IHII) and 192-212 (IFFL…LCLI).

It localises to the membrane. This is Transmembrane protein 247 from Bos taurus (Bovine).